The primary structure comprises 317 residues: Methionyl-tRNA formyltransferase (317 aa).

Residue 112-115 (SLLP) participates in (6S)-5,6,7,8-tetrahydrofolate binding.

The protein belongs to the Fmt family.

The catalysed reaction is L-methionyl-tRNA(fMet) + (6R)-10-formyltetrahydrofolate = N-formyl-L-methionyl-tRNA(fMet) + (6S)-5,6,7,8-tetrahydrofolate + H(+). Its function is as follows. Attaches a formyl group to the free amino group of methionyl-tRNA(fMet). The formyl group appears to play a dual role in the initiator identity of N-formylmethionyl-tRNA by promoting its recognition by IF2 and preventing the misappropriation of this tRNA by the elongation apparatus. The polypeptide is Methionyl-tRNA formyltransferase (Geobacter sulfurreducens (strain ATCC 51573 / DSM 12127 / PCA)).